Consider the following 262-residue polypeptide: MSTAEATREENVYMAKLAEQAERYEEMVEFMEKVAKTADVGELTVEERNLLSVAYKNVIGARRASWRIISSIEQKEESRGNEAYVASIKEYRTRIETELSKICDGILKLLDSHLVPSATAAESKVFYLKMKGDYHRYLAEFKAGAERKEAAENTLVAYKSAQDIALADLPTTHPIRLGLALNFSVFYYEILNSPDRACNLAKQAFDEAIAELDSLGEESYKDSTLIMQLLRDNLTLWTSDNAEEGGDEIKEAASKPEGEGHS.

The interval 240-262 (DNAEEGGDEIKEAASKPEGEGHS) is disordered. Basic and acidic residues predominate over residues 247–262 (DEIKEAASKPEGEGHS).

It belongs to the 14-3-3 family.

The polypeptide is 14-3-3-like protein A (Hordeum vulgare (Barley)).